Consider the following 423-residue polypeptide: ATP-dependent RNA helicase RhlB (423 aa).

Residues 9–37 carry the Q motif motif; that stretch reads LRFSDLPLHHQVLAALQEKGFDYCTPIQA. Residues 40–217 enclose the Helicase ATP-binding domain; that stretch reads LPMSLAGKDV…FEDMNDPEYV (178 aa). Residue 53–60 participates in ATP binding; it reads AQTGTGKT. The short motif at 163-166 is the DEAD box element; sequence DEAD. The Helicase C-terminal domain occupies 241 to 388; that stretch reads KMALLLTLLE…VSQYDVAALL (148 aa). Residues 397 to 423 form a disordered region; it reads KRGNNNSKNSANSNRTFQKKRSLKRNF. The span at 400-410 shows a compositional bias: low complexity; that stretch reads NNNSKNSANSN. A compositionally biased stretch (basic residues) spans 413-423; it reads FQKKRSLKRNF.

This sequence belongs to the DEAD box helicase family. RhlB subfamily. As to quaternary structure, component of the RNA degradosome, which is a multiprotein complex involved in RNA processing and mRNA degradation.

The protein resides in the cytoplasm. The catalysed reaction is ATP + H2O = ADP + phosphate + H(+). DEAD-box RNA helicase involved in RNA degradation. Has RNA-dependent ATPase activity and unwinds double-stranded RNA. The polypeptide is ATP-dependent RNA helicase RhlB (Pasteurella multocida (strain Pm70)).